The sequence spans 154 residues: Myoglobin (154 aa).

The Globin domain occupies 2 to 148 (GLSDAEWQLV…FRNDIAAQYK (147 aa)). A Phosphoserine modification is found at Ser-4. His-65 is a binding site for nitrite. His-65 serves as a coordination point for O2. Thr-68 bears the Phosphothreonine mark. A heme b-binding site is contributed by His-94.

This sequence belongs to the globin family. In terms of assembly, monomeric.

Its subcellular location is the cytoplasm. The protein localises to the sarcoplasm. It carries out the reaction Fe(III)-heme b-[protein] + nitric oxide + H2O = Fe(II)-heme b-[protein] + nitrite + 2 H(+). It catalyses the reaction H2O2 + AH2 = A + 2 H2O. Its function is as follows. Monomeric heme protein which primary function is to store oxygen and facilitate its diffusion within muscle tissues. Reversibly binds oxygen through a pentacoordinated heme iron and enables its timely and efficient release as needed during periods of heightened demand. Depending on the oxidative conditions of tissues and cells, and in addition to its ability to bind oxygen, it also has a nitrite reductase activity whereby it regulates the production of bioactive nitric oxide. Under stress conditions, like hypoxia and anoxia, it also protects cells against reactive oxygen species thanks to its pseudoperoxidase activity. The sequence is that of Myoglobin (MB) from Oryctolagus cuniculus (Rabbit).